The primary structure comprises 267 residues: Cytokinesis defective protein 7 (267 aa).

Residues 244–267 (RNQADQSILPPSGDQQHHRSELHA) form a disordered region. Positions 258 to 267 (QQHHRSELHA) are enriched in basic and acidic residues.

The polypeptide is Cytokinesis defective protein 7 (Caenorhabditis elegans).